The chain runs to 149 residues: D-aminoacyl-tRNA deacylase (149 aa).

Positions Gly-137–Pro-138 match the Gly-cisPro motif, important for rejection of L-amino acids motif.

The protein belongs to the DTD family. In terms of assembly, homodimer.

Its subcellular location is the cytoplasm. It catalyses the reaction glycyl-tRNA(Ala) + H2O = tRNA(Ala) + glycine + H(+). The catalysed reaction is a D-aminoacyl-tRNA + H2O = a tRNA + a D-alpha-amino acid + H(+). An aminoacyl-tRNA editing enzyme that deacylates mischarged D-aminoacyl-tRNAs. Also deacylates mischarged glycyl-tRNA(Ala), protecting cells against glycine mischarging by AlaRS. Acts via tRNA-based rather than protein-based catalysis; rejects L-amino acids rather than detecting D-amino acids in the active site. By recycling D-aminoacyl-tRNA to D-amino acids and free tRNA molecules, this enzyme counteracts the toxicity associated with the formation of D-aminoacyl-tRNA entities in vivo and helps enforce protein L-homochirality. This is D-aminoacyl-tRNA deacylase from Desulfitobacterium hafniense (strain DSM 10664 / DCB-2).